The sequence spans 161 residues: Ribosomal RNA large subunit methyltransferase H (161 aa).

S-adenosyl-L-methionine is bound by residues leucine 78, glycine 110, and leucine 129–phenylalanine 134.

Belongs to the RNA methyltransferase RlmH family. Homodimer.

The protein resides in the cytoplasm. The enzyme catalyses pseudouridine(1915) in 23S rRNA + S-adenosyl-L-methionine = N(3)-methylpseudouridine(1915) in 23S rRNA + S-adenosyl-L-homocysteine + H(+). Functionally, specifically methylates the pseudouridine at position 1915 (m3Psi1915) in 23S rRNA. In Symbiobacterium thermophilum (strain DSM 24528 / JCM 14929 / IAM 14863 / T), this protein is Ribosomal RNA large subunit methyltransferase H.